A 605-amino-acid polypeptide reads, in one-letter code: Golgi-associated RAB2 interactor protein 3 (605 aa).

Disordered stretches follow at residues 234–265 and 407–529; these read GEGI…AART and YMSE…ALQK. A compositionally biased stretch (low complexity) spans 239–265; it reads HASHGTASAASPSTSTPGAAEGGAART. Residues 434 to 457 are compositionally biased toward basic residues; that stretch reads KKDRHPSRKSSHHRKAGESHRRRA. A Bipartite nuclear localization signal motif is present at residues 441-458; the sequence is RKSSHHRKAGESHRRRAG. Over residues 463-473 the composition is skewed to polar residues; that stretch reads KASSHRSASGH. A compositionally biased stretch (basic and acidic residues) spans 475-484; the sequence is NTRDDKKEKG. The span at 489–500 shows a compositional bias: basic residues; that stretch reads RGKRHGSSRKSS. Over residues 513–526 the composition is skewed to polar residues; that stretch reads QELGKNQSASSTGA. A Phosphoserine modification is found at S592.

This sequence belongs to the GARIN family. Interacts (via N-terminus) with RAB2B (in GTP-bound form). Interacts with FRG1. As to expression, expressed in adult spermatocytes and spermatids (at protein level).

It is found in the golgi apparatus. The protein localises to the nucleus. The protein resides in the cajal body. In terms of biological role, may be involved in RNA biogenesis. This is Golgi-associated RAB2 interactor protein 3 from Homo sapiens (Human).